Reading from the N-terminus, the 291-residue chain is N-acetylmannosamine kinase (291 aa).

Residues 5–12 (AIDIGGTK) and 132–139 (GVGGGVVC) each bind ATP. Zn(2+) is bound by residues His156, Cys166, Cys168, and Cys173.

Belongs to the ROK (NagC/XylR) family. NanK subfamily. In terms of assembly, homodimer.

The catalysed reaction is an N-acyl-D-mannosamine + ATP = an N-acyl-D-mannosamine 6-phosphate + ADP + H(+). The protein operates within amino-sugar metabolism; N-acetylneuraminate degradation; D-fructose 6-phosphate from N-acetylneuraminate: step 2/5. Catalyzes the phosphorylation of N-acetylmannosamine (ManNAc) to ManNAc-6-P. The sequence is that of N-acetylmannosamine kinase from Salmonella agona (strain SL483).